Reading from the N-terminus, the 727-residue chain is ADP-ribosylation factor-binding protein GGA3 (727 aa).

The region spanning 16-146 (ATNPSNRQED…MLKRQGIVQS (131 aa)) is the VHS domain. Phosphoserine is present on residues Ser159 and Ser275. In terms of domain architecture, GAT spans 171–298 (DEEKSKLLAK…VINSYKTIIE (128 aa)). The tract at residues 299-597 (GQIINGEVTT…VHVPLESIKP (299 aa)) is unstructured hinge. The segment at 334–385 (TPSSSSPVLAPAPAPPTSGIPILPPPPQTSGPPRSRSSSQAEAPSGPDSTNN) is disordered. Pro residues predominate over residues 343 to 363 (APAPAPPTSGIPILPPPPQTS). Residues 364-374 (GPPRSRSSSQA) show a composition bias toward low complexity. The short motif at 391–395 (DEELL) is the DXXLL element. Positions 400–419 (SDPAPTAPKESAGNSPWHLF) are disordered. Residues 598–719 (SSALPVTAYD…TELGEVDQFP (122 aa)) enclose the GAE domain.

Belongs to the GGA protein family. Monomer. Interacts with GGA1 and GGA2. Binds to clathrin and activated ARFs, such as ARF1, ARF5 and ARF6. Binds RABEP1 and RABGEF1. Interacts with the membrane proteins M6PR/CD-MPR and IGF2R/CI-MPR and the accessory proteins SYNRG, EPN4, NECAP1, NECAP2 and AFTPH/aftiphilin. Interacts with TSG101 and UBC. Interacts with ADRA2B. Interacts with NTRK1; the interaction is independent of NTRK1 activation and ubiquitination. Interacts (via VHS domain) with BACE1 (via DXXLL motif). In terms of processing, phosphorylated by CK2 and dephosphorylated by PP2A. Phosphorylation of GGA3 allows the internal DXXLL motif to bind the VHS domain and to inhibit the recognition of cargo signals. Ubiquitinated. Post-translationally, proteolytically cleaved during apoptosis by CASP3.

It is found in the golgi apparatus. It localises to the trans-Golgi network membrane. Its subcellular location is the endosome membrane. The protein resides in the early endosome membrane. The protein localises to the recycling endosome membrane. Functionally, plays a role in protein sorting and trafficking between the trans-Golgi network (TGN) and endosomes. Mediates the ARF-dependent recruitment of clathrin to the TGN and binds ubiquitinated proteins and membrane cargo molecules with a cytosolic acidic cluster-dileucine (DXXLL) motif. Mediates export of the GPCR receptor ADRA2B to the cell surface. Involved in BACE1 transport and sorting as well as regulation of BACE1 protein levels. Regulates retrograde transport of BACE1 from endosomes to the trans-Golgi network via interaction through the VHS motif and dependent of BACE1 phosphorylation. Modulates BACE1 protein levels independently of the interaction between VHS domain and DXXLL motif through recognition of ubiquitination. Key player in a novel DXXLL-mediated endosomal sorting machinery to the recycling pathway that targets NTRK1 to the plasma membrane. The protein is ADP-ribosylation factor-binding protein GGA3 of Rattus norvegicus (Rat).